A 363-amino-acid polypeptide reads, in one-letter code: Chorismate synthase (363 aa).

Residues R48 and R54 each coordinate NADP(+). FMN is bound by residues 125-127 (RSS), 237-238 (NA), G277, 292-296 (KPTSS), and R318.

This sequence belongs to the chorismate synthase family. As to quaternary structure, homotetramer. FMNH2 is required as a cofactor.

The enzyme catalyses 5-O-(1-carboxyvinyl)-3-phosphoshikimate = chorismate + phosphate. It functions in the pathway metabolic intermediate biosynthesis; chorismate biosynthesis; chorismate from D-erythrose 4-phosphate and phosphoenolpyruvate: step 7/7. Its function is as follows. Catalyzes the anti-1,4-elimination of the C-3 phosphate and the C-6 proR hydrogen from 5-enolpyruvylshikimate-3-phosphate (EPSP) to yield chorismate, which is the branch point compound that serves as the starting substrate for the three terminal pathways of aromatic amino acid biosynthesis. This reaction introduces a second double bond into the aromatic ring system. This Pseudomonas paraeruginosa (strain DSM 24068 / PA7) (Pseudomonas aeruginosa (strain PA7)) protein is Chorismate synthase.